Reading from the N-terminus, the 25-residue chain is Phospholipase A1 verutoxin-2a (25 aa).

It belongs to the AB hydrolase superfamily. Lipase family. In terms of processing, contains six disulfide bonds. Expressed by the venom gland.

Its subcellular location is the secreted. The enzyme catalyses a 1,2-diacyl-sn-glycero-3-phosphocholine + H2O = a 2-acyl-sn-glycero-3-phosphocholine + a fatty acid + H(+). It catalyses the reaction 1-(9Z-octadecenoyl)-2-hexadecanoyl-sn-glycero-3-phosphocholine + H2O = 2-hexadecanoyl-sn-glycero-3-phosphocholine + (9Z)-octadecenoate + H(+). The catalysed reaction is a 1-acyl-sn-glycero-3-phosphocholine + H2O = sn-glycerol 3-phosphocholine + a fatty acid + H(+). Its pathway is phospholipid metabolism. Activity is maximal in the presence of calcium. However, unlike phospholipases A2 whose catalytic activity is strictly calcium-dependent, this enzyme shows considerable catalytic activity on phosphatidylcholine emulsified in calcium free solution; the catalytic activity of VT-2a assayed in the absence of calcium ions is 18-20% of that assayed in solution containing calcium ions. Catalyzes the hydrolysis of glycerophospholipids such as phosphatidylcholine (1,2-diacyl-sn-glycero-3-phosphocholine) and has a moderate activity to hydrolyze lysoglycerophospholipids such as lysophosphatidylcholine (1-acyl-sn-glycero-3-phosphocholine), but is unable to hydrolyze sphingomyelin. In addition to acting as an allergen, it possesses a potent hemolytic activity on red blood cells of mice (98.8% of hemolysis at 3.0 ug/ml). This is Phospholipase A1 verutoxin-2a from Vespa velutina (Asian yellow-legged hornet).